Here is an 85-residue protein sequence, read N- to C-terminus: Large ribosomal subunit protein bL31B (85 aa).

Belongs to the bacterial ribosomal protein bL31 family. Type B subfamily. As to quaternary structure, part of the 50S ribosomal subunit.

This Clavibacter michiganensis subsp. michiganensis (strain NCPPB 382) protein is Large ribosomal subunit protein bL31B.